Here is a 360-residue protein sequence, read N- to C-terminus: Phospho-N-acetylmuramoyl-pentapeptide-transferase (360 aa).

The next 10 membrane-spanning stretches (helical) occupy residues 16–36 (FAVF…ALVL), 73–93 (TMGG…WADL), 97–117 (YVWV…VDDY), 134–154 (YFWQ…TAST), 168–188 (YSIP…VGSS), 199–219 (GLAI…CYLS), 236–256 (AGEL…FLWF), 263–283 (VFMG…IAVI), 288–308 (IVLF…VIQV), and 338–358 (VIVR…ATLK).

The protein belongs to the glycosyltransferase 4 family. MraY subfamily. Requires Mg(2+) as cofactor.

Its subcellular location is the cell inner membrane. It catalyses the reaction UDP-N-acetyl-alpha-D-muramoyl-L-alanyl-gamma-D-glutamyl-meso-2,6-diaminopimeloyl-D-alanyl-D-alanine + di-trans,octa-cis-undecaprenyl phosphate = di-trans,octa-cis-undecaprenyl diphospho-N-acetyl-alpha-D-muramoyl-L-alanyl-D-glutamyl-meso-2,6-diaminopimeloyl-D-alanyl-D-alanine + UMP. It participates in cell wall biogenesis; peptidoglycan biosynthesis. Functionally, catalyzes the initial step of the lipid cycle reactions in the biosynthesis of the cell wall peptidoglycan: transfers peptidoglycan precursor phospho-MurNAc-pentapeptide from UDP-MurNAc-pentapeptide onto the lipid carrier undecaprenyl phosphate, yielding undecaprenyl-pyrophosphoryl-MurNAc-pentapeptide, known as lipid I. In Pseudomonas fluorescens (strain Pf0-1), this protein is Phospho-N-acetylmuramoyl-pentapeptide-transferase.